Reading from the N-terminus, the 62-residue chain is Defensin BmKDfsin3 (62 aa).

An N-terminal signal peptide occupies residues 1–24 (MKTIVILFVLALVFCTLEMGMVEA). Disulfide bonds link cysteine 28-cysteine 49, cysteine 35-cysteine 57, and cysteine 39-cysteine 59.

Belongs to the invertebrate defensin family. Type 2 subfamily. Low expression in both venom and non-venom glands (hemolymph).

The protein resides in the secreted. In terms of biological role, antibacterial peptide active against Gram-positive bacteria (including S.aureus ATCC25923 (MIC=2.5 uM), M.luteus AB93113 (MIC=2.5 uM), and the antibiotic-resistant S.epidermidis PRSE P1389 (MIC=1.25 uM)), but not against Gram-negative bacteria (including E.coli and P.aeruginosa). Also blocks the currents of Kv1.1/KCNA1 (57% inhibition), Kv1.2/KCNA2 (27.5% inhibition), Kv1.3/KCNA3 (IC(50)=23.4 nM, 84.3% inhibition), KCa3.1/KCNN4/IK (15% inhibition), KCa2.3/KCNN3/SK3 (87.5% inhibition) and Kv11.1/KCNH2/ERG1 (30.4% inhibition) channels (tested at 1 uM). It inhibits potassium channel current by interacting with the pore region. This is Defensin BmKDfsin3 from Olivierus martensii (Manchurian scorpion).